The primary structure comprises 684 residues: DNA-directed RNA polymerase subunit beta' (684 aa).

Residues Cys-69, Cys-71, Cys-87, and Cys-90 each coordinate Zn(2+). Residues Asp-491, Asp-493, and Asp-495 each coordinate Mg(2+).

The protein belongs to the RNA polymerase beta' chain family. RpoC1 subfamily. In plastids the minimal PEP RNA polymerase catalytic core is composed of four subunits: alpha, beta, beta', and beta''. When a (nuclear-encoded) sigma factor is associated with the core the holoenzyme is formed, which can initiate transcription. Mg(2+) is required as a cofactor. The cofactor is Zn(2+).

The protein localises to the plastid. It is found in the chloroplast. The catalysed reaction is RNA(n) + a ribonucleoside 5'-triphosphate = RNA(n+1) + diphosphate. Functionally, DNA-dependent RNA polymerase catalyzes the transcription of DNA into RNA using the four ribonucleoside triphosphates as substrates. This chain is DNA-directed RNA polymerase subunit beta', found in Phaseolus vulgaris (Kidney bean).